Consider the following 1241-residue polypeptide: ATP-dependent helicase/nuclease subunit A (1241 aa).

The region spanning 12 to 485 (SQWTDDQWKA…IDLAKNFRSR (474 aa)) is the UvrD-like helicase ATP-binding domain. 33–40 (AAAGSGKT) serves as a coordination point for ATP. Residues 505–805 (GEIDYDADAE…RIMTIHKSKG (301 aa)) enclose the UvrD-like helicase C-terminal domain.

This sequence belongs to the helicase family. AddA subfamily. As to quaternary structure, heterodimer of AddA and AddB/RexB. It depends on Mg(2+) as a cofactor.

The enzyme catalyses Couples ATP hydrolysis with the unwinding of duplex DNA by translocating in the 3'-5' direction.. It carries out the reaction ATP + H2O = ADP + phosphate + H(+). Its function is as follows. The heterodimer acts as both an ATP-dependent DNA helicase and an ATP-dependent, dual-direction single-stranded exonuclease. Recognizes the chi site generating a DNA molecule suitable for the initiation of homologous recombination. The AddA nuclease domain is required for chi fragment generation; this subunit has the helicase and 3' -&gt; 5' nuclease activities. This is ATP-dependent helicase/nuclease subunit A from Bacillus cereus (strain ATCC 14579 / DSM 31 / CCUG 7414 / JCM 2152 / NBRC 15305 / NCIMB 9373 / NCTC 2599 / NRRL B-3711).